Here is a 179-residue protein sequence, read N- to C-terminus: UPF0227 protein Sbal_2415 (179 aa).

The protein belongs to the UPF0227 family.

The chain is UPF0227 protein Sbal_2415 from Shewanella baltica (strain OS155 / ATCC BAA-1091).